The primary structure comprises 639 residues: ATP-dependent rRNA helicase spb4 (639 aa).

The Q motif signature appears at 14 to 42 (WDAVTPPLSEWVLEAMSSMGFARMTPVQA). Positions 45-249 (IPLFMAHKDV…RVGLRNPVKI (205 aa)) constitute a Helicase ATP-binding domain. 58–65 (AVTGSGKT) contributes to the ATP binding site. Positions 197–200 (DEAD) match the DEAD box motif. In terms of domain architecture, Helicase C-terminal spans 283–437 (ALKNILSSVQ…SISFSDADAT (155 aa)). Disordered regions lie at residues 531–601 (RKEL…ETKE) and 620–639 (AAKA…KGFD). A coiled-coil region spans residues 561-624 (QNAENKNKKL…RFRQAAAKAE (64 aa)). Residues 577–601 (KLKQEKTKWENMTEEERQKARETKE) are compositionally biased toward basic and acidic residues.

This sequence belongs to the DEAD box helicase family. DDX55/SPB4 subfamily. As to quaternary structure, component of pre-60S ribosomal complexes.

The protein localises to the nucleus. It is found in the nucleolus. The catalysed reaction is ATP + H2O = ADP + phosphate + H(+). In terms of biological role, ATP-binding RNA helicase involved in the biogenesis of 60S ribosomal subunits. Binds 90S pre-ribosomal particles and dissociates from pre-60S ribosomal particles after processing of 27SB pre-rRNA. Required for the normal formation of 18S rRNA through the processing of pre-rRNAs at sites A0, A1 and A2, and the normal formation of 25S and 5.8S rRNAs through the processing of pre-rRNAs at sites C1 and C2. The protein is ATP-dependent rRNA helicase spb4 of Aspergillus clavatus (strain ATCC 1007 / CBS 513.65 / DSM 816 / NCTC 3887 / NRRL 1 / QM 1276 / 107).